Consider the following 254-residue polypeptide: TLC domain-containing protein At5g14285 (254 aa).

6 helical membrane passes run 12–32 (DLPIFFSMFLTIYLIAYFIVF), 45–65 (SCLISIFHGSPAVFLATRAVF), 82–101 (TVLDFSVAYFLTDLFHYIVF), 124–144 (FLVFHGACAILGLLILAEVTS), 172–192 (LSPPFYAFYSIVRGVLGPLFF), and 211–231 (WLWISWAIVVGIAITVSILWI). The TLC domain occupies 38–248 (QIRPEASSCL…FSERKANKIR (211 aa)).

The protein resides in the membrane. This is TLC domain-containing protein At5g14285 from Arabidopsis thaliana (Mouse-ear cress).